The sequence spans 153 residues: Actin-related protein 2/3 complex subunit 5-like protein (153 aa).

Serine 64 carries the post-translational modification Phosphoserine.

The protein belongs to the ARPC5 family. May be a component of the Arp2/3 complex in which it may replace ARPC5.

The protein localises to the cytoplasm. It localises to the cytoskeleton. May function as component of the Arp2/3 complex which is involved in regulation of actin polymerization and together with an activating nucleation-promoting factor (NPF) mediates the formation of branched actin networks. The protein is Actin-related protein 2/3 complex subunit 5-like protein (Arpc5l) of Mus musculus (Mouse).